The following is a 517-amino-acid chain: Benzoate 4-monooxygenase bphA (517 aa).

The helical transmembrane segment at 4 to 24 threads the bilayer; that stretch reads LLLSPYGAYLGLALLVLYYLL. N-linked (GlcNAc...) asparagine glycosylation is found at asparagine 282 and asparagine 325. Cysteine 461 is a binding site for heme.

Belongs to the cytochrome P450 family. The cofactor is heme.

It is found in the membrane. It catalyses the reaction benzoate + reduced [NADPH--hemoprotein reductase] + O2 = 4-hydroxybenzoate + oxidized [NADPH--hemoprotein reductase] + H2O + H(+). In terms of biological role, cytochrome P450 monooxygenase; part of the benzoic acid degradation pathway also known as the protocatechuic acid pathway. Benzoic acid debradation begins with the conversion of benzoic acid into 4-hydroxybenzoic acid through hydroxylation by the benzoate-4-monooxygenase bphA, and its partner NADPH-cytochrome P450 reductase cprA which act as a mediator in electron donation from NADPH. 4-Hydroxybenzoic acid is then converted into 3,4-dihydroxybenzoic acid (also called protocatechuic acid) by the p-hydroxybenzoate-m-hydroxylase phhA. Protocatechuic acid is converted into 3-carboxy-cis,cis-muconic acid by the intradiol ring-cleavage dioxygenase prcA, which is further metabolized through the 3-oxoadipate pathway to finally enter the tricarboxylic acid cycle (TCA). The sequence is that of Benzoate 4-monooxygenase bphA from Aspergillus niger (strain ATCC MYA-4892 / CBS 513.88 / FGSC A1513).